Here is a 1394-residue protein sequence, read N- to C-terminus: ATP-dependent permease AUS1 (1394 aa).

Residues 1 to 420 (MSISKYFTPV…PLTTIGSYSR (420 aa)) lie on the Cytoplasmic side of the membrane. Residues 33 to 273 (KKSYDAEDSM…FRDTLGIEKD (241 aa)) enclose the ABC transporter 1 domain. 6 helical membrane-spanning segments follow: residues 421 to 443 (GSLTFFSILFFTFLSLADMPIAF), 468 to 490 (TVFDYCFKLCLVIVFSIILYFLA), 497 to 519 (ARFFIFLLFLSFYNFCMVSLFAL), 529 to 551 (VANLFAGILLLAIAMYASYVIYL), 558 to 575 (FVWIAYLNPAMYAMEAIL), and 636 to 658 (VWRNFGIIIGFLVFFIACTLFAS). Residues 659–1080 (QYIKPYFNKD…QYICTKRDMT (422 aa)) are Cytoplasmic-facing. The region spanning 751-978 (ISWKNINYTV…YFMSHDNTLV (228 aa)) is the ABC transporter 2 domain. 782-789 (GESGAGKT) provides a ligand contact to ATP. The next 6 membrane-spanning stretches (helical) occupy residues 1081 to 1103 (YVMAKYCLNGGAGLFIGFSFWHI), 1107 to 1129 (IIGLQDSIFFCFMALCVSSPLIN), 1156 to 1178 (VLLLSQSIIELPLALTSSTLFFV), 1193 to 1215 (AGVFFLNYMLFAAYYSTLGLWLI), 1224 to 1246 (AAVFVAFIYSFTASFCGVMQPYS), and 1346 to 1368 (FGIEWAFVGFNFFAMFAGYYLTY). At 1369-1394 (VARIWPKVFKIITKVIPHRGKKPVQN) the chain is on the cytoplasmic side.

This sequence belongs to the ABC transporter superfamily. ABCG family. PDR (TC 3.A.1.205) subfamily.

The protein localises to the membrane. Its function is as follows. Transporter involved in the uptake of sterol. The polypeptide is ATP-dependent permease AUS1 (AUS1) (Saccharomyces cerevisiae (strain ATCC 204508 / S288c) (Baker's yeast)).